Consider the following 942-residue polypeptide: Lambda-carrageenase (942 aa).

An N-terminal signal peptide occupies residues 1-25; the sequence is MKIKILSAMVASSLLIGCVIPTVKA.

In terms of assembly, monomer.

The protein resides in the secreted. The enzyme catalyses Endohydrolysis of (1-&gt;4)-beta-linkages in the backbone of lambda-carrageenan, resulting in the tetrasaccharide alpha-D-Galp2,6S2-(1-&gt;3)-beta-D-Galp2S-(1-&gt;4)-alpha-D-Galp2,6S2-(1-&gt;3)-D-Galp2S.. Its function is as follows. Hydrolyzes lambda-carrageenan with inversion of anomeric configuration. Does not hydrolyze iota- and kappa-carrageenans, agarose or porphyran. This Pseudoalteromonas carrageenovora (Alteromonas carrageenovora) protein is Lambda-carrageenase.